The sequence spans 179 residues: Putative FBD-associated F-box protein At3g12840 (179 aa).

The F-box domain occupies 14–60; sequence AARINDLPDDLLATVLSFVPTKDAVATSILSKRWRPIWKRAVNLESD. Positions 101 to 152 constitute an FBD domain; the sequence is KWKQPDFVPLSLYRSLEAFEWIGFKGREKTEKKAAFHILRNACNLKTMAITT.

The protein is Putative FBD-associated F-box protein At3g12840 of Arabidopsis thaliana (Mouse-ear cress).